A 193-amino-acid chain; its full sequence is Capsid protein (193 aa).

Post-translationally, the N-terminus is blocked.

It is found in the virion. This chain is Capsid protein, found in Crataegus (hawthorn).